The following is a 1659-amino-acid chain: Fatty acid synthase subunit alpha (1659 aa).

Residues 114–139 form a disordered region; the sequence is TQAQASGGAGTIAGAGSSTAPVTAPP. The 76-residue stretch at 160-235 folds into the Carrier domain; sequence AQAFEIVRTL…AALQKTFTGQ (76 aa). At serine 195 the chain carries O-(pantetheine 4'-phosphoryl)serine. A ketoreductase (KR) domain region spans residues 588–826; the sequence is GRSVLITGAG…LCLMFNTMCS (239 aa). The Ketosynthase family 3 (KS3) domain occupies 1030–1575; it reads KQLLHEVLIQ…QKGAQTIVVH (546 aa). Catalysis depends on for beta-ketoacyl synthase activity residues cysteine 1217, histidine 1458, and histidine 1499. The disordered stretch occupies residues 1631–1659; sequence ETLLDPTPPQTNVDDRVARSIVQQESAEP.

Belongs to the thiolase-like superfamily. Fungal fatty acid synthetase subunit alpha family. In terms of assembly, [Alpha(6)beta(6)] hexamers of two multifunctional subunits (alpha and beta). Post-translationally, 4'-phosphopantetheine is transferred from CoA to a specific serine of the acyl carrier domain by the C-terminal PPT domain. This modification is essential for activity because fatty acids are bound in thioester linkage to the sulfhydryl of the prosthetic group.

The enzyme catalyses acetyl-CoA + n malonyl-CoA + 2n NADPH + 4n H(+) = a long-chain-acyl-CoA + n CoA + n CO2 + 2n NADP(+).. It carries out the reaction a fatty acyl-[ACP] + malonyl-[ACP] + H(+) = a 3-oxoacyl-[ACP] + holo-[ACP] + CO2. The catalysed reaction is a (3R)-hydroxyacyl-[ACP] + NADP(+) = a 3-oxoacyl-[ACP] + NADPH + H(+). It participates in secondary metabolite biosynthesis. In terms of biological role, fatty acid synthase subunit alpha; part of the gene cluster that mediates the biosynthesis of aspercryptins, linear lipopeptides built from six amino acids including 2 highly unusual and nonproteogenic amino acids, 2-amino-octanoic acid (2aoa) and 2-amino-dodecanol (2adol). The core structure of aspercryptins is as follows: Ser/Ala-Thr-Ile/Val-2aoa-Asn-2adol. The first step of aspercryptin biosynthesis is the generation of the fatty acid precursors, octanoic and dodecanoic acids, by the FAS subunits atnF and atnM. The fatty acid precursors are likely transformed into the corresponding alpha-amino fatty acids in three steps. First, they are hydroxylated by the cytochrome P450 monooxygenase atnE, then oxidized to the corresponding alpha-keto acids by the NAD(P)-dependent oxidoreductase atnD, and finally converted to the alpha-amino fatty acids by the PLP-dependent aminotransferases atnH or atnJ. the alpha-amino fatty acids, 2-amino-octanoic and 2-amino-dodecanoic acids, are recognized, activated, and covalently tethered to the NRPS atnA by its fourth and sixth adenylation domains. The second module of atnA is the Thr module and contains an epimerase (E) domain responsible for the epimerization of Thr to D-allo-Thr. Additionally, despite atnA having only one epimerase domain, the first amino acid of aspercryptin A1 is D-Ser, suggesting that serine is either loaded directly as D-Ser on the first module or that the epimerase domain in the threonine module epimerizes both L-Ser and L-Thr. After condensation of the hexapeptide of aspercryptin, the C-terminal reductase (TE) domain might be involved in the reductive release and production of the aldehyde hexapeptide. Further reduction would generate aspercryptins. The variety of aspercryptins produced reflects the flexibility of the atnA NRPS, allowing incorporation of alanine instead of serine, valine for isoleucine, and a C10 fatty amino alcohol instead of the C12 version. AtnB seems to be involved in the selectivity for Ile versus Val by the third module. Moreover, type B, C and D aspercryptins have an additional N-terminal cichorine, acetyl and propionyl group respectively. The chain is Fatty acid synthase subunit alpha from Emericella nidulans (strain FGSC A4 / ATCC 38163 / CBS 112.46 / NRRL 194 / M139) (Aspergillus nidulans).